The sequence spans 508 residues: Maturase K (508 aa).

This sequence belongs to the intron maturase 2 family. MatK subfamily.

It is found in the plastid. Its subcellular location is the chloroplast. Its function is as follows. Usually encoded in the trnK tRNA gene intron. Probably assists in splicing its own and other chloroplast group II introns. The polypeptide is Maturase K (Amburana cearensis (Cerejeira)).